The chain runs to 476 residues: Bifunctional protein HldE (476 aa).

Positions 1 to 319 (MKLTLPDYDQ…EAIYGSQDSG (319 aa)) are ribokinase. Residue 195-198 (NLSE) participates in ATP binding. D264 is a catalytic residue. Residues 344–476 (MTNGCFDILH…IIEAIRGGKG (133 aa)) are cytidylyltransferase.

In the N-terminal section; belongs to the carbohydrate kinase PfkB family. It in the C-terminal section; belongs to the cytidylyltransferase family. As to quaternary structure, homodimer.

It carries out the reaction D-glycero-beta-D-manno-heptose 7-phosphate + ATP = D-glycero-beta-D-manno-heptose 1,7-bisphosphate + ADP + H(+). The catalysed reaction is D-glycero-beta-D-manno-heptose 1-phosphate + ATP + H(+) = ADP-D-glycero-beta-D-manno-heptose + diphosphate. The protein operates within nucleotide-sugar biosynthesis; ADP-L-glycero-beta-D-manno-heptose biosynthesis; ADP-L-glycero-beta-D-manno-heptose from D-glycero-beta-D-manno-heptose 7-phosphate: step 1/4. It participates in nucleotide-sugar biosynthesis; ADP-L-glycero-beta-D-manno-heptose biosynthesis; ADP-L-glycero-beta-D-manno-heptose from D-glycero-beta-D-manno-heptose 7-phosphate: step 3/4. Functionally, catalyzes the phosphorylation of D-glycero-D-manno-heptose 7-phosphate at the C-1 position to selectively form D-glycero-beta-D-manno-heptose-1,7-bisphosphate. Catalyzes the ADP transfer from ATP to D-glycero-beta-D-manno-heptose 1-phosphate, yielding ADP-D-glycero-beta-D-manno-heptose. This is Bifunctional protein HldE from Photobacterium profundum (strain SS9).